The primary structure comprises 338 residues: Glycerol-3-phosphate dehydrogenase [NAD(P)+] (338 aa).

NADPH contacts are provided by Ser-13, Trp-14, and Lys-108. Sn-glycerol 3-phosphate is bound by residues Lys-108, Gly-139, and Ser-141. Ala-143 provides a ligand contact to NADPH. Sn-glycerol 3-phosphate is bound by residues Lys-194, Asp-247, Ser-257, Arg-258, and Asn-259. Lys-194 functions as the Proton acceptor in the catalytic mechanism. Residue Arg-258 coordinates NADPH. 2 residues coordinate NADPH: Val-282 and Glu-284.

The protein localises to the cytoplasm. It catalyses the reaction sn-glycerol 3-phosphate + NAD(+) = dihydroxyacetone phosphate + NADH + H(+). The enzyme catalyses sn-glycerol 3-phosphate + NADP(+) = dihydroxyacetone phosphate + NADPH + H(+). It functions in the pathway membrane lipid metabolism; glycerophospholipid metabolism. Functionally, catalyzes the reduction of the glycolytic intermediate dihydroxyacetone phosphate (DHAP) to sn-glycerol 3-phosphate (G3P), the key precursor for phospholipid synthesis. This is Glycerol-3-phosphate dehydrogenase [NAD(P)+] from Streptococcus pyogenes serotype M6 (strain ATCC BAA-946 / MGAS10394).